The primary structure comprises 34 residues: YYICESCWTCESCAGSTESSCVSACNACDLCPNK.

In terms of processing, contains 4 disulfide bonds. Expressed by the venom duct.

Its subcellular location is the secreted. Acts as a neurotoxin by inhibiting an ion channel. The sequence is that of Turripeptide OL127 from Iotyrris olangoensis (Sea snail).